Reading from the N-terminus, the 329-residue chain is Acetyl-coenzyme A carboxylase carboxyl transferase subunit alpha (329 aa).

The CoA carboxyltransferase C-terminal domain maps to 40–294 (QLETLAARRR…REALERNLSE (255 aa)).

The protein belongs to the AccA family. As to quaternary structure, acetyl-CoA carboxylase is a heterohexamer composed of biotin carboxyl carrier protein (AccB), biotin carboxylase (AccC) and two subunits each of ACCase subunit alpha (AccA) and ACCase subunit beta (AccD).

The protein resides in the cytoplasm. It catalyses the reaction N(6)-carboxybiotinyl-L-lysyl-[protein] + acetyl-CoA = N(6)-biotinyl-L-lysyl-[protein] + malonyl-CoA. Its pathway is lipid metabolism; malonyl-CoA biosynthesis; malonyl-CoA from acetyl-CoA: step 1/1. In terms of biological role, component of the acetyl coenzyme A carboxylase (ACC) complex. First, biotin carboxylase catalyzes the carboxylation of biotin on its carrier protein (BCCP) and then the CO(2) group is transferred by the carboxyltransferase to acetyl-CoA to form malonyl-CoA. This is Acetyl-coenzyme A carboxylase carboxyl transferase subunit alpha from Synechococcus sp. (strain CC9311).